The primary structure comprises 42 residues: Beta-defensin 13 (42 aa).

3 cysteine pairs are disulfide-bonded: C9/C38, C16/C31, and C21/C39.

This sequence belongs to the beta-defensin family. As to expression, neutrophilic granules.

It is found in the secreted. Its function is as follows. Has bactericidal activity. Active against E.coli ML35 and S.aureus 502A. The chain is Beta-defensin 13 (DEFB13) from Bos taurus (Bovine).